A 64-amino-acid polypeptide reads, in one-letter code: uncharacterized protein (64 aa).

Positions 35–64 (TIRKPPIEHAAGPLGSTSRAGHRSYGGVAS) are disordered.

This is an uncharacterized protein from Mycobacterium tuberculosis (strain ATCC 25618 / H37Rv).